The following is a 166-amino-acid chain: Lipoprotein signal peptidase (166 aa).

3 consecutive transmembrane segments (helical) span residues 12–32 (WLWL…LILQ), 70–90 (WFFA…MYRA), and 102–122 (ALII…GFVV). Catalysis depends on residues aspartate 123 and aspartate 141. A helical membrane pass occupies residues 142–162 (SAICFGAAMIVLEGFLPNAAA).

This sequence belongs to the peptidase A8 family.

Its subcellular location is the cell inner membrane. It catalyses the reaction Release of signal peptides from bacterial membrane prolipoproteins. Hydrolyzes -Xaa-Yaa-Zaa-|-(S,diacylglyceryl)Cys-, in which Xaa is hydrophobic (preferably Leu), and Yaa (Ala or Ser) and Zaa (Gly or Ala) have small, neutral side chains.. Its pathway is protein modification; lipoprotein biosynthesis (signal peptide cleavage). Its function is as follows. This protein specifically catalyzes the removal of signal peptides from prolipoproteins. This Enterobacter sp. (strain 638) protein is Lipoprotein signal peptidase.